Here is a 382-residue protein sequence, read N- to C-terminus: Prophage ps2 probable integrase (382 aa).

The 80-residue stretch at 63–142 (AKFTDIAEEW…TLNLIFDYAV (80 aa)) folds into the Core-binding (CB) domain. A Tyr recombinase domain is found at 170–376 (IQNKYLEQNE…TENMKSSIID (207 aa)). Catalysis depends on residues R209, K242, H326, R329, and H352. Y363 (O-(3'-phospho-DNA)-tyrosine intermediate) is an active-site residue.

This sequence belongs to the 'phage' integrase family.

The sequence is that of Prophage ps2 probable integrase (ps201) from Lactococcus lactis subsp. lactis (strain IL1403) (Streptococcus lactis).